A 125-amino-acid chain; its full sequence is Small ribosomal subunit protein uS12m (125 aa).

Belongs to the universal ribosomal protein uS12 family.

It is found in the mitochondrion. In terms of biological role, protein S12 is involved in the translation initiation step. The protein is Small ribosomal subunit protein uS12m (RPS12) of Allium cepa (Onion).